A 1386-amino-acid polypeptide reads, in one-letter code: DNA-directed RNA polymerase subunit beta'' (1386 aa).

Cys220, Cys291, Cys298, and Cys301 together coordinate Zn(2+).

Belongs to the RNA polymerase beta' chain family. RpoC2 subfamily. In plastids the minimal PEP RNA polymerase catalytic core is composed of four subunits: alpha, beta, beta', and beta''. When a (nuclear-encoded) sigma factor is associated with the core the holoenzyme is formed, which can initiate transcription. The cofactor is Zn(2+).

The protein resides in the plastid. It localises to the chloroplast. The enzyme catalyses RNA(n) + a ribonucleoside 5'-triphosphate = RNA(n+1) + diphosphate. Functionally, DNA-dependent RNA polymerase catalyzes the transcription of DNA into RNA using the four ribonucleoside triphosphates as substrates. The protein is DNA-directed RNA polymerase subunit beta'' of Glycine max (Soybean).